The primary structure comprises 393 residues: MTSTHLPATLLLLGSGELGKEVAIAAQRLGCRVVAVDRYANAPAMQVADTAVVIPMTDAEALKQVIREHQPALVIPEIEALAVDALAELEAEGITVIPTARATAITMNRDRIRDLAAGELGLRTARFGYASSAEELSSAAEPLGWPVVVKPVMSSSGKGQSVATNPEELQQAWTAATQGARGSASLVIVEEFLRFEQEITLLTVRQKDGPTLFCPPIGHIQERGDYQCSWQPAELQQSQLLEAQRMARQVTDALGGAGIFGVEFFIASGEVIFSELSPRPHDTGLVTLRGQNLSEFELHLRAVLGLPIPSITSTGAAASRVVLAGADQQGGPVHYRGVAEALAVPESELLLFGKPEARPMRRMGVALASGSSLAEARGRADTAAQAVALEIGG.

N(1)-(5-phospho-beta-D-ribosyl)glycinamide-binding positions include 17–18 (EL) and Glu77. Residues Arg109, Lys150, 155 to 160 (SSGKGQ), 190 to 193 (EEFL), and Glu198 contribute to the ATP site. Residues 114-304 (DLAAGELGLR…EFELHLRAVL (191 aa)) enclose the ATP-grasp domain. Residues Glu263 and Glu275 each coordinate Mg(2+). N(1)-(5-phospho-beta-D-ribosyl)glycinamide is bound by residues Asp282, Lys354, and 361 to 362 (RR).

The protein belongs to the PurK/PurT family. As to quaternary structure, homodimer.

It catalyses the reaction N(1)-(5-phospho-beta-D-ribosyl)glycinamide + formate + ATP = N(2)-formyl-N(1)-(5-phospho-beta-D-ribosyl)glycinamide + ADP + phosphate + H(+). It participates in purine metabolism; IMP biosynthesis via de novo pathway; N(2)-formyl-N(1)-(5-phospho-D-ribosyl)glycinamide from N(1)-(5-phospho-D-ribosyl)glycinamide (formate route): step 1/1. Its function is as follows. Involved in the de novo purine biosynthesis. Catalyzes the transfer of formate to 5-phospho-ribosyl-glycinamide (GAR), producing 5-phospho-ribosyl-N-formylglycinamide (FGAR). Formate is provided by PurU via hydrolysis of 10-formyl-tetrahydrofolate. This chain is Formate-dependent phosphoribosylglycinamide formyltransferase, found in Synechococcus sp. (strain RCC307).